The sequence spans 1605 residues: GTPase-activating protein pac-1 (1605 aa).

The required for localization to adherens junctions stretch occupies residues 1–574 (MEEHHRRLHV…QRFIALFNSS (574 aa)). 3 disordered regions span residues 293–430 (QRHP…ISTS), 529–556 (MRSG…LNAP), and 574–593 (SKTS…RSRT). The segment covering 323-334 (SKEDPSEDTGHD) has biased composition (basic and acidic residues). 3 stretches are compositionally biased toward low complexity: residues 353 to 365 (RNAS…SSRS), 420 to 430 (TTSSTSSISTS), and 530 to 552 (RSGG…TSRS). In terms of domain architecture, PH spans 599–726 (RFALPGTILQ…WISVLQSSSE (128 aa)). Polar residues-rich tracts occupy residues 728–745 (GIAT…TTGR) and 846–855 (KNSQLQSPTA). 2 disordered regions span residues 728-752 (GIAT…NAVS) and 846-942 (KNSQ…AGAP). The span at 868 to 879 (SSSQTMATTSSS) shows a compositional bias: low complexity. A compositionally biased stretch (basic residues) spans 908–917 (SGRKWKKSKA). The segment covering 928–941 (GSSSGSQQQGAAGA) has biased composition (low complexity). The Rho-GAP domain maps to 948–1146 (VRIADCPTGS…TLIHYNLWMF (199 aa)). Disordered regions lie at residues 1152-1176 (TEDA…YGVG), 1207-1258 (EGKG…AASV), 1277-1339 (SRQT…RRKR), 1438-1533 (TSDY…ARRH), and 1554-1605 (GIRK…DELL). Residues 1211 to 1229 (QKIKNMLRRNSRRDKSKSK) are compositionally biased toward basic residues. 2 stretches are compositionally biased toward polar residues: residues 1244–1257 (GWTQ…SAAS) and 1278–1300 (RQTV…RLDQ). The span at 1301 to 1312 (SPSLESSLGSLP) shows a compositional bias: low complexity. Residues 1438 to 1453 (TSDYSTTSSAPLSTNP) show a composition bias toward polar residues. Over residues 1461 to 1476 (DQPNSSSDYASSDPSP) the composition is skewed to low complexity. 2 stretches are compositionally biased toward polar residues: residues 1480–1493 (NPST…SNLA) and 1500–1515 (HATS…MSRS). The segment covering 1558 to 1575 (SSPDVSRDEVSDDEKNHQ) has biased composition (basic and acidic residues).

As to quaternary structure, associated with the catenin-cadherin complex consisting of hmr-1, hmp-1 and hmp-2; this is mediated by interaction with picc-1.

The protein resides in the cytoplasm. Its subcellular location is the cell junction. It is found in the adherens junction. In terms of biological role, GTPase-activating protein for members of the Rho subfamily including Rac1, RhoA and cdc42 and other Ras-related subfamilies including let-60. Mediates radial (inner-outer) polarity and gastrulation by excluding par-6 from contacted cell surfaces; acts by inactivating cdc42 at inner cell surfaces which limits active cdc42 to outer cell surfaces devoid of cell-cell contacts, where cdc42 can bind and recruit par-6. Required for blastomere polarization. The sequence is that of GTPase-activating protein pac-1 (pac-1) from Caenorhabditis elegans.